The sequence spans 95 residues: Aspartyl/glutamyl-tRNA(Asn/Gln) amidotransferase subunit C (95 aa).

Belongs to the GatC family. As to quaternary structure, heterotrimer of A, B and C subunits.

It carries out the reaction L-glutamyl-tRNA(Gln) + L-glutamine + ATP + H2O = L-glutaminyl-tRNA(Gln) + L-glutamate + ADP + phosphate + H(+). The enzyme catalyses L-aspartyl-tRNA(Asn) + L-glutamine + ATP + H2O = L-asparaginyl-tRNA(Asn) + L-glutamate + ADP + phosphate + 2 H(+). Its function is as follows. Allows the formation of correctly charged Asn-tRNA(Asn) or Gln-tRNA(Gln) through the transamidation of misacylated Asp-tRNA(Asn) or Glu-tRNA(Gln) in organisms which lack either or both of asparaginyl-tRNA or glutaminyl-tRNA synthetases. The reaction takes place in the presence of glutamine and ATP through an activated phospho-Asp-tRNA(Asn) or phospho-Glu-tRNA(Gln). This Pelodictyon phaeoclathratiforme (strain DSM 5477 / BU-1) protein is Aspartyl/glutamyl-tRNA(Asn/Gln) amidotransferase subunit C.